Consider the following 206-residue polypeptide: Tektin bundle-interacting protein 1 (206 aa).

As to quaternary structure, microtubule inner protein component of sperm flagellar doublet microtubules.

It is found in the cytoplasm. The protein resides in the cytoskeleton. It localises to the cilium axoneme. The protein localises to the flagellum axoneme. Functionally, microtubule inner protein (MIP) part of the dynein-decorated doublet microtubules (DMTs) in cilia axoneme, which is required for motile cilia beating. Located at the center of the tektin bundle where may function to recruit tektins or stabilize the bundle. This chain is Tektin bundle-interacting protein 1, found in Mus musculus (Mouse).